Reading from the N-terminus, the 152-residue chain is D-aminoacyl-tRNA deacylase (152 aa).

The Gly-cisPro motif, important for rejection of L-amino acids motif lies at Gly-142–Pro-143.

This sequence belongs to the DTD family. As to quaternary structure, homodimer.

The protein localises to the cytoplasm. The catalysed reaction is glycyl-tRNA(Ala) + H2O = tRNA(Ala) + glycine + H(+). It catalyses the reaction a D-aminoacyl-tRNA + H2O = a tRNA + a D-alpha-amino acid + H(+). An aminoacyl-tRNA editing enzyme that deacylates mischarged D-aminoacyl-tRNAs. Also deacylates mischarged glycyl-tRNA(Ala), protecting cells against glycine mischarging by AlaRS. Acts via tRNA-based rather than protein-based catalysis; rejects L-amino acids rather than detecting D-amino acids in the active site. By recycling D-aminoacyl-tRNA to D-amino acids and free tRNA molecules, this enzyme counteracts the toxicity associated with the formation of D-aminoacyl-tRNA entities in vivo and helps enforce protein L-homochirality. This chain is D-aminoacyl-tRNA deacylase, found in Burkholderia cenocepacia (strain HI2424).